The sequence spans 267 residues: Ras-related protein Rab-36 (267 aa).

Val68, Gly69, Lys70, Thr71, Ser72, Asp83, Tyr86, and Thr89 together coordinate GTP. Thr71 contributes to the Mg(2+) binding site. The Switch 1 signature appears at 76 to 94; sequence RLCKNVFDHDYKATIGVDF. Mg(2+)-binding residues include Thr89 and Asp112. The Switch 2 signature appears at 113–132; sequence TAGQEKFKCIASAYYRGAQV. GTP-binding residues include Gly115, Lys172, Asp174, Ser203, Ala204, and Lys205. Residues Cys266 and Cys267 are each lipidated (S-geranylgeranyl cysteine).

The protein belongs to the small GTPase superfamily. Rab family. Mg(2+) serves as cofactor.

The protein resides in the golgi apparatus membrane. The enzyme catalyses GTP + H2O = GDP + phosphate + H(+). Regulated by guanine nucleotide exchange factors (GEFs) which promote the exchange of bound GDP for free GTP. Regulated by GTPase activating proteins (GAPs) which increase the GTP hydrolysis activity. Inhibited by GDP dissociation inhibitors (GDIs). The small GTPases Rab are key regulators of intracellular membrane trafficking, from the formation of transport vesicles to their fusion with membranes. Rabs cycle between an inactive GDP-bound form and an active GTP-bound form that is able to recruit to membranes different sets of downstream effectors directly responsible for vesicle formation, movement, tethering and fusion. This is Ras-related protein Rab-36 from Mus musculus (Mouse).